We begin with the raw amino-acid sequence, 322 residues long: Malate dehydrogenase (322 aa).

NAD(+) contacts are provided by residues 10–15 (GSGQIG) and aspartate 34. 2 residues coordinate substrate: arginine 83 and arginine 89. NAD(+) is bound by residues asparagine 96 and 119-121 (ITN). Asparagine 121 and arginine 152 together coordinate substrate. Histidine 176 functions as the Proton acceptor in the catalytic mechanism.

The protein belongs to the LDH/MDH superfamily. MDH type 3 family.

It catalyses the reaction (S)-malate + NAD(+) = oxaloacetate + NADH + H(+). In terms of biological role, catalyzes the reversible oxidation of malate to oxaloacetate. The polypeptide is Malate dehydrogenase (Bradyrhizobium diazoefficiens (strain JCM 10833 / BCRC 13528 / IAM 13628 / NBRC 14792 / USDA 110)).